Consider the following 192-residue polypeptide: Erythropoietin (192 aa).

Residues M1–G26 form the signal peptide. Disulfide bonds link C33–C187 and C55–C59. N50 carries N-linked (GlcNAc...) asparagine glycosylation. N-linked (GlcNAc...) asparagine glycosylation is found at N64 and N109.

Belongs to the EPO/TPO family.

The protein localises to the secreted. In terms of biological role, hormone involved in the regulation of erythrocyte proliferation and differentiation and the maintenance of a physiological level of circulating erythrocyte mass. Binds to EPOR leading to EPOR dimerization and JAK2 activation thereby activating specific downstream effectors, including STAT1 and STAT3. This is Erythropoietin (EPO) from Equus caballus (Horse).